Consider the following 204-residue polypeptide: Anthranilate synthase component 2 (204 aa).

Residues Arg-13–Arg-204 enclose the Glutamine amidotransferase type-1 domain. An L-glutamine-binding site is contributed by Gly-64–Cys-66. The active-site Nucleophile; for GATase activity is Cys-91. Residues Gln-95 and Ser-141–Leu-142 each bind L-glutamine. Catalysis depends on for GATase activity residues His-181 and Glu-183.

In terms of assembly, heterotetramer consisting of two non-identical subunits: a beta subunit (TrpG) and a large alpha subunit (TrpE).

It catalyses the reaction chorismate + L-glutamine = anthranilate + pyruvate + L-glutamate + H(+). It functions in the pathway amino-acid biosynthesis; L-tryptophan biosynthesis; L-tryptophan from chorismate: step 1/5. Functionally, part of a heterotetrameric complex that catalyzes the two-step biosynthesis of anthranilate, an intermediate in the biosynthesis of L-tryptophan. In the first step, the glutamine-binding beta subunit (TrpG) of anthranilate synthase (AS) provides the glutamine amidotransferase activity which generates ammonia as a substrate that, along with chorismate, is used in the second step, catalyzed by the large alpha subunit of AS (TrpE) to produce anthranilate. In the absence of TrpG, TrpE can synthesize anthranilate directly from chorismate and high concentrations of ammonia. This is Anthranilate synthase component 2 (trpG) from Thermus thermophilus (strain ATCC 27634 / DSM 579 / HB8).